Reading from the N-terminus, the 375-residue chain is Alcohol dehydrogenase 1 (375 aa).

Alanine 1 carries the N-acetylalanine modification. The Zn(2+) site is built by cysteine 46, histidine 68, cysteine 98, cysteine 101, cysteine 104, cysteine 112, and cysteine 175. NAD(+) is bound by residues 200-205 (GLGGVG), aspartate 224, lysine 229, 293-295 (VGV), and arginine 370.

The protein belongs to the zinc-containing alcohol dehydrogenase family. Class-I subfamily. In terms of assembly, homodimer. Requires Zn(2+) as cofactor.

It localises to the cytoplasm. It carries out the reaction a primary alcohol + NAD(+) = an aldehyde + NADH + H(+). The enzyme catalyses a secondary alcohol + NAD(+) = a ketone + NADH + H(+). The sequence is that of Alcohol dehydrogenase 1 from Columba livia (Rock dove).